A 329-amino-acid polypeptide reads, in one-letter code: DNA-directed RNA polymerase subunit alpha (329 aa).

Residues 1-235 (MLGSVTDFLK…EQLEAFVDLR (235 aa)) form an alpha N-terminal domain (alpha-NTD) region. The alpha C-terminal domain (alpha-CTD) stretch occupies residues 249-329 (FDPILLRPVD…NWPPASIADE (81 aa)).

It belongs to the RNA polymerase alpha chain family. As to quaternary structure, homodimer. The RNAP catalytic core consists of 2 alpha, 1 beta, 1 beta' and 1 omega subunit. When a sigma factor is associated with the core the holoenzyme is formed, which can initiate transcription.

It carries out the reaction RNA(n) + a ribonucleoside 5'-triphosphate = RNA(n+1) + diphosphate. DNA-dependent RNA polymerase catalyzes the transcription of DNA into RNA using the four ribonucleoside triphosphates as substrates. The polypeptide is DNA-directed RNA polymerase subunit alpha (Aeromonas hydrophila subsp. hydrophila (strain ATCC 7966 / DSM 30187 / BCRC 13018 / CCUG 14551 / JCM 1027 / KCTC 2358 / NCIMB 9240 / NCTC 8049)).